The following is a 1025-amino-acid chain: Complement receptor type 2 (1025 aa).

An N-terminal signal peptide occupies residues 1–11 (MLTWFLFYFSE). In terms of domain architecture, Sushi 1 spans 12 to 75 (ISCDPPPEVK…WDKAPPICES (64 aa)). Topologically, residues 12–963 (ISCDPPPEVK…PLALCKYRRW (952 aa)) are extracellular. 2 cysteine pairs are disulfide-bonded: Cys-14/Cys-56 and Cys-42/Cys-73. N-linked (GlcNAc...) asparagine glycosylation is found at Asn-77 and Asn-113. Sushi domains lie at 80–140 (ISCS…VCES), 144–204 (LECP…TCKE), 205–265 (AQCE…VCKE), 266–336 (ILCP…YCVL), 341–400 (VLCL…VCEK), 401–460 (GCQA…QCTV), 461–516 (AECK…LCKE), 517–587 (ITCP…LCKL), 592–651 (VQCT…LCKK), 652–706 (EGCE…VCTV), 707–771 (ILCQ…QCLQ), 776–835 (THCP…TCIR), 839–899 (LGCQ…FCKE), and 900–960 (VNCS…LCKY). Intrachain disulfides connect Cys-82–Cys-124, Cys-110–Cys-138, Cys-146–Cys-189, Cys-175–Cys-202, Cys-207–Cys-248, Cys-234–Cys-263, Cys-268–Cys-317, Cys-297–Cys-334, Cys-343–Cys-385, Cys-371–Cys-398, Cys-402–Cys-445, Cys-431–Cys-458, Cys-463–Cys-501, Cys-487–Cys-514, Cys-519–Cys-568, Cys-548–Cys-585, Cys-594–Cys-636, Cys-622–Cys-649, Cys-654–Cys-689, Cys-675–Cys-704, Cys-709–Cys-752, Cys-738–Cys-769, Cys-778–Cys-820, Cys-806–Cys-833, Cys-841–Cys-884, and Cys-870–Cys-897. Residues Asn-276, Asn-316, Asn-364, and Asn-380 are each glycosylated (N-linked (GlcNAc...) asparagine). An N-linked (GlcNAc...) asparagine glycan is attached at Asn-484. Residue Asn-527 is glycosylated (N-linked (GlcNAc...) asparagine). 2 N-linked (GlcNAc...) asparagine glycosylation sites follow: Asn-615 and Asn-639. N-linked (GlcNAc...) asparagine glycosylation is present at Asn-694. Asn-754, Asn-790, Asn-813, Asn-823, and Asn-851 each carry an N-linked (GlcNAc...) asparagine glycan. Residue Asn-901 is glycosylated (N-linked (GlcNAc...) asparagine). 2 disulfide bridges follow: Cys-902/Cys-945 and Cys-931/Cys-958. Residues 964 to 990 (STIPLICGISVGSALIILMSVGFCMIL) traverse the membrane as a helical segment. Over 991–1025 (KHRESNYYTKTRPKEGALHLETREVYSIDPYNPAS) the chain is Cytoplasmic.

Belongs to the receptors of complement activation (RCA) family. As to quaternary structure, interacts (via Sushi domain 1 and 2) with C3. Interacts with CD19. Part of a complex composed of CD19, CR2/CD21, CD81 and IFITM1/CD225 in the membrane of mature B-cells. Interacts (via Sushi domain 1 and 2) with FCER2 (via the C-terminus). Interacts with CD23. Interacts with FCRL5. Interacts with CR1. Interacts with INFNA1. B-lymphocytes.

Its subcellular location is the cell membrane. Functionally, serves as a receptor for various ligands including complement component CD3d, HNRNPU OR IFNA1. When C3d is bound to antigens, attaches to C3d on B-cell surface and thereby facilitates the recognition and uptake of antigens by B-cells. This interaction enhances B-cell activation and subsequent immune responses. Forms a complex with several partners on the surface of B-cells including CD19, FCRL5 and CD81, to form the B-cell coreceptor complex that plays a crucial role in B-cell activation and signaling. Also induces specific intracellular signaling separately from the BCR and CD19 by activating the tyrosine kinase SRC, which then phosphorylates nucleolin/NCL and triggers AKT and GSK3 kinase activities in a SYK/CD19-independent manner. Acts as a ligand for CD23 (FcepsilonRII), a low-affinity receptor for IgE, which is expressed on B-cells and other immune cells, and thus participates in the regulation of IgE production. The protein is Complement receptor type 2 (Cr2) of Mus musculus (Mouse).